The chain runs to 261 residues: Cytochrome c oxidase subunit 3 (261 aa).

Topologically, residues 1-15 (MTHQTHAYHMVDPSP) are mitochondrial matrix. A helical membrane pass occupies residues 16–34 (WPLTGALSALLMTSGLTMW). The Mitochondrial intermembrane segment spans residues 35–40 (FHYHSV). Residues 41–66 (VLLFLGLMTNTLTMFQWWRDVVREGT) form a helical membrane-spanning segment. Residues 67–72 (FQGHHT) are Mitochondrial matrix-facing. A helical transmembrane segment spans residues 73-105 (PVVQEGLRYGMILFITSEVLFFTGFFWAFYHSS). Over 106-128 (LAPTPELGSYWPPVGVYPLNPLE) the chain is Mitochondrial intermembrane. A helical transmembrane segment spans residues 129-152 (VPLLNTSVLLASGVTITWAHHSLM). Residues 153-155 (EGN) are Mitochondrial matrix-facing. Residues 156-183 (RKNMLQALLITILLGVYFTLLQMFEYYE) traverse the membrane as a helical segment. Over 184–190 (ASFTISD) the chain is Mitochondrial intermembrane. The helical transmembrane segment at 191–223 (GIYGSTFFVTTGFHGLHVIIGSTFLLTCFIRQL) threads the bilayer. Residues 224 to 232 (KFHFTSNHH) are Mitochondrial matrix-facing. Residues 233 to 256 (FGFEAAAWYWHFVDVVWLFLYLSI) traverse the membrane as a helical segment. Residues 257-261 (YWWGS) are Mitochondrial intermembrane-facing.

The protein belongs to the cytochrome c oxidase subunit 3 family. As to quaternary structure, component of the cytochrome c oxidase (complex IV, CIV), a multisubunit enzyme composed of 14 subunits. The complex is composed of a catalytic core of 3 subunits MT-CO1, MT-CO2 and MT-CO3, encoded in the mitochondrial DNA, and 11 supernumerary subunits COX4I, COX5A, COX5B, COX6A, COX6B, COX6C, COX7A, COX7B, COX7C, COX8 and NDUFA4, which are encoded in the nuclear genome. The complex exists as a monomer or a dimer and forms supercomplexes (SCs) in the inner mitochondrial membrane with NADH-ubiquinone oxidoreductase (complex I, CI) and ubiquinol-cytochrome c oxidoreductase (cytochrome b-c1 complex, complex III, CIII), resulting in different assemblies (supercomplex SCI(1)III(2)IV(1) and megacomplex MCI(2)III(2)IV(2)).

The protein resides in the mitochondrion inner membrane. The enzyme catalyses 4 Fe(II)-[cytochrome c] + O2 + 8 H(+)(in) = 4 Fe(III)-[cytochrome c] + 2 H2O + 4 H(+)(out). In terms of biological role, component of the cytochrome c oxidase, the last enzyme in the mitochondrial electron transport chain which drives oxidative phosphorylation. The respiratory chain contains 3 multisubunit complexes succinate dehydrogenase (complex II, CII), ubiquinol-cytochrome c oxidoreductase (cytochrome b-c1 complex, complex III, CIII) and cytochrome c oxidase (complex IV, CIV), that cooperate to transfer electrons derived from NADH and succinate to molecular oxygen, creating an electrochemical gradient over the inner membrane that drives transmembrane transport and the ATP synthase. Cytochrome c oxidase is the component of the respiratory chain that catalyzes the reduction of oxygen to water. Electrons originating from reduced cytochrome c in the intermembrane space (IMS) are transferred via the dinuclear copper A center (CU(A)) of subunit 2 and heme A of subunit 1 to the active site in subunit 1, a binuclear center (BNC) formed by heme A3 and copper B (CU(B)). The BNC reduces molecular oxygen to 2 water molecules using 4 electrons from cytochrome c in the IMS and 4 protons from the mitochondrial matrix. In Mammuthus primigenius (Siberian woolly mammoth), this protein is Cytochrome c oxidase subunit 3 (MT-CO3).